A 413-amino-acid chain; its full sequence is MIQFQKKTPNFLFYDYETFGIHTALDKPAQFACIRTDINLNIIDDPQYFYCFPSDDYLPDPGSVLITHITPQYTEKNGTNEYNFSQKIYDILMQSNTCVVGYNNINFDDEITRNIFYRNFFDPYEWSWKNGNSRWDILNLLRACYALRPTGINWPKNELGLTSFKLSDLTKTNNIVHLNAHNAVSDVYATIEIAKLVKKKQPRLFDFFFKIRKKNELYKLIDLRNFQPIIYISAYFGAIYHNMSCILPIAWHENNSNILIAIDLFKDIKTLINMCKKICFDSIFIKNLLDSGVVLLHLNRCPILAPIQVIRKEDYNRLNFHRFSLNKKIELIKKNMFFIQNIKIIFSKNNNTNQFFNVDLEIYNGFFNSKDKKKIQIIRNTDPVFLKHIFCNFHDSRLKNLFFRYRARNFFIH.

The region spanning leucine 12 to isoleucine 193 is the Exonuclease domain. Mg(2+)-binding residues include aspartate 15, glutamate 17, and aspartate 186. Glutamate 17 contributes to the substrate binding site. Residues proline 202–asparagine 349 form the ExoI SH3-like domain. An ExoI C-terminal domain is found at asparagine 350–histidine 413.

As to quaternary structure, monomer. Interacts with ssb (via C-terminus); this interaction stimulates the exonuclease activity by recruiting the enzyme to its substrate. It depends on Mg(2+) as a cofactor.

The catalysed reaction is Exonucleolytic cleavage in the 3'- to 5'-direction to yield nucleoside 5'-phosphates.. In terms of biological role, degrades single-stranded DNA (ssDNA) in a highly processive manner. Also functions as a DNA deoxyribophosphodiesterase that releases deoxyribose-phosphate moieties following the cleavage of DNA at an apurinic/apyrimidinic (AP) site by either an AP endonuclease or AP lyase. This is Exodeoxyribonuclease I (sbcB) from Buchnera aphidicola subsp. Acyrthosiphon pisum (strain APS) (Acyrthosiphon pisum symbiotic bacterium).